The primary structure comprises 207 residues: C-type lectin domain family 2 member D11 (207 aa).

At 1 to 44 (MSAKKASQPMLNTTGSLQEGEMGKMFHGKCLRIVSPESPAKLYC) the chain is on the cytoplasmic side. 2 positions are modified to phosphoserine: Ser-7 and Ser-16. A helical; Signal-anchor for type II membrane protein membrane pass occupies residues 45-65 (CYGVIMVLSVAVVALSVALSV). Residues 66–207 (KMTPQISTIN…LQCKTPFSPM (142 aa)) lie on the Extracellular side of the membrane. Residues 87–198 (VGNKCFYFSE…SCSKLNSYSL (112 aa)) form the C-type lectin domain. Residue Asn-100 is glycosylated (N-linked (GlcNAc...) asparagine).

The protein localises to the cell membrane. Functionally, receptor for KLRB1B that protects target cells against natural killer cell-mediated lysis. This is C-type lectin domain family 2 member D11 (Clec2d11) from Rattus norvegicus (Rat).